Here is a 491-residue protein sequence, read N- to C-terminus: Regulatory protein NPR5 (491 aa).

The 91-residue stretch at Ser26–Pro116 folds into the BTB domain. The segment at Arg122–Ser136 adopts a C2HC NPR-type zinc-finger fold. Residues Cys125, Cys130, His132, and Cys135 each coordinate Zn(2+). 4 ANK repeats span residues Gln254 to Asp283, Glu284 to Tyr313, Ala318 to Val347, and Gly351 to Leu385. A disordered region spans residues Glu400–Phe491. Low complexity predominate over residues Asn403–Asn413. Residues Asp457–Ser470 are compositionally biased toward basic and acidic residues.

This sequence belongs to the plant 'ANKYRIN-BTB/POZ' family. 'NOOT-BOP-COCH-like' (NBCL) subfamily. As to quaternary structure, homodimer or heterodimer with BOP1. Interacts with PAN. Highly expressed in young floral meristem. Predominantly expressed in the boundary between floral meristem (FM) and sepal primordia.

It is found in the cytoplasm. It localises to the nucleus. It participates in protein modification; protein ubiquitination. May act as a substrate-specific adapter of an E3 ubiquitin-protein ligase complex (CUL3-RBX1-BTB) which mediates the ubiquitination and subsequent proteasomal degradation of target proteins. Acts redundantly with BOP2. BOP1/2 promote leaf and floral meristem fate and determinacy in a pathway targeting AP1 and AGL24. BOP1/2 act as transcriptional co-regulators through direct interaction with TGA factors, including PAN, a direct regulator of AP1. Controls lateral organ fate through positive regulation of adaxial-abaxial polarity genes ATHB-14/PHB, YAB1/FIL and YAB3, and through positive regulation of LOB domain-containing genes LOB, LBD6/AS2 and LBD36. Promotes and maintains a developmentally determinate state in leaf cells through the negative regulation of JAG, JGL and class I KNOX genes. Is also involved in nectary development, formation of normal abscission zones (AZs) and suppression of bract formation, probably by regulating the cell wall disorganization. The protein is Regulatory protein NPR5 of Arabidopsis thaliana (Mouse-ear cress).